Reading from the N-terminus, the 42-residue chain is Photosystem I reaction center subunit IX (42 aa).

The helical transmembrane segment at Tyr7–Ile27 threads the bilayer.

The protein belongs to the PsaJ family.

The protein localises to the plastid. Its subcellular location is the chloroplast thylakoid membrane. Its function is as follows. May help in the organization of the PsaE and PsaF subunits. The protein is Photosystem I reaction center subunit IX of Psilotum nudum (Whisk fern).